Consider the following 367-residue polypeptide: Glutamate 5-kinase (367 aa).

K10 provides a ligand contact to ATP. Residues S50, D137, and N149 each coordinate substrate. Residues 169 to 170 (TD) and 211 to 217 (TGGMSTK) each bind ATP. Residues 275-353 (AGEITVDEGA…QQIDAILGYE (79 aa)) form the PUA domain.

The protein belongs to the glutamate 5-kinase family.

It is found in the cytoplasm. The enzyme catalyses L-glutamate + ATP = L-glutamyl 5-phosphate + ADP. Its pathway is amino-acid biosynthesis; L-proline biosynthesis; L-glutamate 5-semialdehyde from L-glutamate: step 1/2. Its function is as follows. Catalyzes the transfer of a phosphate group to glutamate to form L-glutamate 5-phosphate. This is Glutamate 5-kinase from Salmonella paratyphi A (strain ATCC 9150 / SARB42).